The primary structure comprises 255 residues: Leucyl/phenylalanyl-tRNA--protein transferase (255 aa).

Belongs to the L/F-transferase family.

The protein resides in the cytoplasm. The enzyme catalyses N-terminal L-lysyl-[protein] + L-leucyl-tRNA(Leu) = N-terminal L-leucyl-L-lysyl-[protein] + tRNA(Leu) + H(+). The catalysed reaction is N-terminal L-arginyl-[protein] + L-leucyl-tRNA(Leu) = N-terminal L-leucyl-L-arginyl-[protein] + tRNA(Leu) + H(+). It carries out the reaction L-phenylalanyl-tRNA(Phe) + an N-terminal L-alpha-aminoacyl-[protein] = an N-terminal L-phenylalanyl-L-alpha-aminoacyl-[protein] + tRNA(Phe). In terms of biological role, functions in the N-end rule pathway of protein degradation where it conjugates Leu, Phe and, less efficiently, Met from aminoacyl-tRNAs to the N-termini of proteins containing an N-terminal arginine or lysine. This chain is Leucyl/phenylalanyl-tRNA--protein transferase, found in Polaromonas sp. (strain JS666 / ATCC BAA-500).